A 385-amino-acid chain; its full sequence is Benzoate O-methyltransferase (385 aa).

Tyr18 lines the S-adenosyl-L-homocysteine pocket. Residue Gln25 participates in benzoate binding. Positions 59, 64, 106, 107, 145, and 146 each coordinate S-adenosyl-L-homocysteine. A benzoate-binding site is contributed by Trp167. 4 residues coordinate Mg(2+): Asn184, Glu270, Phe272, and Asn273.

The protein belongs to the methyltransferase superfamily. Type-7 methyltransferase family. SABATH subfamily. It depends on Mg(2+) as a cofactor.

It carries out the reaction benzoate + S-adenosyl-L-methionine = methyl benzoate + S-adenosyl-L-homocysteine. Methyltransferase involved in the biosynthesis of methyl benzoate in response to stresses. Utilizes exclusively benzoic acid (BA) as substrate. The chain is Benzoate O-methyltransferase (OMT8) from Zea mays (Maize).